A 66-amino-acid polypeptide reads, in one-letter code: ATP synthase protein 8 (66 aa).

Residues 8-24 form a helical membrane-spanning segment; it reads PWPMVIMSMILTLFYIT. The residue at position 54 (Lys-54) is an N6-acetyllysine; alternate. N6-succinyllysine; alternate is present on Lys-54. N6-acetyllysine is present on Lys-57.

Belongs to the ATPase protein 8 family. In terms of assembly, F-type ATPases have 2 components, CF(1) - the catalytic core - and CF(0) - the membrane proton channel. Component of an ATP synthase complex composed of ATP5PB, ATP5MC1, ATP5F1E, ATP5PD, ATP5ME, ATP5PF, ATP5MF, MT-ATP6, MT-ATP8, ATP5F1A, ATP5F1B, ATP5F1D, ATP5F1C, ATP5PO, ATP5MG, ATP5MK and ATP5MJ. Interacts with PRICKLE3.

The protein localises to the mitochondrion membrane. Functionally, mitochondrial membrane ATP synthase (F(1)F(0) ATP synthase or Complex V) produces ATP from ADP in the presence of a proton gradient across the membrane which is generated by electron transport complexes of the respiratory chain. F-type ATPases consist of two structural domains, F(1) - containing the extramembraneous catalytic core and F(0) - containing the membrane proton channel, linked together by a central stalk and a peripheral stalk. During catalysis, ATP synthesis in the catalytic domain of F(1) is coupled via a rotary mechanism of the central stalk subunits to proton translocation. Part of the complex F(0) domain. Minor subunit located with subunit a in the membrane. This is ATP synthase protein 8 (MT-ATP8) from Alouatta sara (Bolivian red howler monkey).